The chain runs to 778 residues: Kin of IRRE-like protein 3 (778 aa).

Residues 1–21 (MRPFQLDLLFLCFFLFSQELG) form the signal peptide. Residues 22-535 (LQKRGCCLVL…GLEAESVPMA (514 aa)) lie on the Extracellular side of the membrane. 5 consecutive Ig-like C2-type domains span residues 48-142 (YSFS…ARLT), 147-243 (PDDP…TSVT), 249-330 (PPLV…RTVD), 335-415 (PRMT…VTLT), and 419-515 (PPII…IRLK). Cysteine 69 and cysteine 127 are oxidised to a cystine. The N-linked (GlcNAc...) asparagine glycan is linked to asparagine 167. Cysteine 170 and cysteine 227 form a disulfide bridge. Asparagine 253 is a glycosylation site (N-linked (GlcNAc...) asparagine). Cysteine 271 and cysteine 314 form a disulfide bridge. An N-linked (GlcNAc...) asparagine glycan is attached at asparagine 324. Intrachain disulfides connect cysteine 356/cysteine 398 and cysteine 440/cysteine 499. The N-linked (GlcNAc...) asparagine glycan is linked to asparagine 498. The helical transmembrane segment at 536-556 (VIIGVAVGAGVAFLVLMATIV) threads the bilayer. The Cytoplasmic portion of the chain corresponds to 557–778 (AFCCARSQRN…PLQRRMQTHV (222 aa)). Over residues 727-736 (CDSSVSSSGK) the composition is skewed to polar residues. A disordered region spans residues 727 to 778 (CDSSVSSSGKQDGYVQFDKASKASASSSHHSQSSSQNSDPSRPLQRRMQTHV). Over residues 748–762 (KASASSSHHSQSSSQ) the composition is skewed to low complexity.

Belongs to the immunoglobulin superfamily. In terms of assembly, homodimer; mediates homophilic interactions to promote cell adhesion. Interacts with NPHS1; forms heterodimers with NPHS1. Interacts with NPHS2/podocin (via the C-terminus). Interacts with CASK. Interacts (via extracellular region) with MAP1B. Interacts (via extracellular region) with MYO16. Interacts (via intracellular region) with ATP1B1. Interacts (via intracellular region) with SHMT2. Interacts (via intracellular region) with UFC1. In terms of processing, undergoes proteolysis by a metalloprotease and gives rise to a soluble form. As to expression, expressed mainly in adult brain, bone marrow and stromal cells. Expressed in diverse regions of the brain, including the cortex, hippocampus, striatum, olfactory bulb and cerebellum. In brain, expressed in pontine nucleus neurons (at protein level). In hippocampus, produced in both the dentate granule neurons and the GABAergic neurons, but not the CA3 neurons. Expressed in subpopulations of vomeronasal sensory neurons. Expressed in a subset of neurons in dorsal root ganglia.

The protein resides in the cell membrane. It is found in the cell projection. Its subcellular location is the axon. It localises to the dendrite. The protein localises to the secreted. Functionally, synaptic adhesion molecule required for the formation of target-specific synapses. Required for formation of target-specific synapses at hippocampal mossy fiber synapses. Required for formation of mossy fiber filopodia, the synaptic structures connecting dentate granule and GABA neurons. Probably acts as a homophilic adhesion molecule that promotes trans-cellular interactions and stabilize mossy fiber filipodia contact and subsequent synapse formation. Required for the coalescence of vomeronasal sensory neuron axons. May be involved in the hematopoietic supportive capacity of stroma cells; the secreted extracellular domain is directly responsible for supporting hematopoietic stem cells. This is Kin of IRRE-like protein 3 (Kirrel3) from Mus musculus (Mouse).